The primary structure comprises 89 residues: Large ribosomal subunit protein uL23cz/uL23cy (89 aa).

Belongs to the universal ribosomal protein uL23 family. In terms of assembly, part of the 50S ribosomal subunit.

The protein localises to the plastid. Its subcellular location is the chloroplast. In terms of biological role, binds to 23S rRNA. The chain is Large ribosomal subunit protein uL23cz/uL23cy (rpl23-A) from Pelargonium hortorum (Common geranium).